A 287-amino-acid chain; its full sequence is Hypersensitive-induced response protein-like protein 2 (287 aa).

Glycine 2 carries N-myristoyl glycine lipidation.

Functionally, positive regulator of hypersensitive response (HR)-like cell death. May be involved in potassium ion channel regulation. The chain is Hypersensitive-induced response protein-like protein 2 (HIRL2) from Oryza sativa subsp. japonica (Rice).